We begin with the raw amino-acid sequence, 78 residues long: Acyl carrier protein (78 aa).

The Carrier domain occupies 2–77 (STIEERVKKI…AAIDYIEAAN (76 aa)). Position 37 is an O-(pantetheine 4'-phosphoryl)serine (Ser-37).

Belongs to the acyl carrier protein (ACP) family. In terms of processing, 4'-phosphopantetheine is transferred from CoA to a specific serine of apo-ACP by AcpS. This modification is essential for activity because fatty acids are bound in thioester linkage to the sulfhydryl of the prosthetic group.

Its subcellular location is the cytoplasm. It functions in the pathway lipid metabolism; fatty acid biosynthesis. In terms of biological role, carrier of the growing fatty acid chain in fatty acid biosynthesis. This chain is Acyl carrier protein, found in Edwardsiella ictaluri (strain 93-146).